Reading from the N-terminus, the 217-residue chain is Elongation factor Ts (217 aa).

Residues 82-85 (TDFV) are involved in Mg(2+) ion dislocation from EF-Tu.

This sequence belongs to the EF-Ts family.

It localises to the cytoplasm. In terms of biological role, associates with the EF-Tu.GDP complex and induces the exchange of GDP to GTP. It remains bound to the aminoacyl-tRNA.EF-Tu.GTP complex up to the GTP hydrolysis stage on the ribosome. The chain is Elongation factor Ts from Desulfitobacterium hafniense (strain DSM 10664 / DCB-2).